The sequence spans 549 residues: CTP synthase (549 aa).

An amidoligase domain region spans residues 1–267 (MTKFVFVTGG…AAQVLSLLNL (267 aa)). Serine 13 lines the CTP pocket. Serine 13 contacts UTP. Residues 14-19 (SIGKGI) and aspartate 71 each bind ATP. Residues aspartate 71 and glutamate 141 each contribute to the Mg(2+) site. CTP is bound by residues 148–150 (DIE), 188–193 (KTKPTQ), and lysine 224. UTP is bound by residues 188 to 193 (KTKPTQ) and lysine 224. The 243-residue stretch at 292 to 534 (EIAIVGKYVR…VQAARTHSSD (243 aa)) folds into the Glutamine amidotransferase type-1 domain. Glycine 354 provides a ligand contact to L-glutamine. The active-site Nucleophile; for glutamine hydrolysis is the cysteine 381. Residues 382 to 385 (LGMQ), glutamate 405, and arginine 462 each bind L-glutamine. Active-site residues include histidine 507 and glutamate 509.

Belongs to the CTP synthase family. Homotetramer.

The enzyme catalyses UTP + L-glutamine + ATP + H2O = CTP + L-glutamate + ADP + phosphate + 2 H(+). The catalysed reaction is L-glutamine + H2O = L-glutamate + NH4(+). It catalyses the reaction UTP + NH4(+) + ATP = CTP + ADP + phosphate + 2 H(+). Its pathway is pyrimidine metabolism; CTP biosynthesis via de novo pathway; CTP from UDP: step 2/2. Its activity is regulated as follows. Allosterically activated by GTP, when glutamine is the substrate; GTP has no effect on the reaction when ammonia is the substrate. The allosteric effector GTP functions by stabilizing the protein conformation that binds the tetrahedral intermediate(s) formed during glutamine hydrolysis. Inhibited by the product CTP, via allosteric rather than competitive inhibition. Functionally, catalyzes the ATP-dependent amination of UTP to CTP with either L-glutamine or ammonia as the source of nitrogen. Regulates intracellular CTP levels through interactions with the four ribonucleotide triphosphates. The polypeptide is CTP synthase (Cyanothece sp. (strain PCC 7425 / ATCC 29141)).